The primary structure comprises 283 residues: Coiled-coil domain-containing protein 42 homolog (283 aa).

2 coiled-coil regions span residues 31-139 and 174-204; these read ATQL…LQRY and QDLRSRDRNNQTEIERVRREMARYKEAHRVS.

This sequence belongs to the CFAP73 family.

In Monosiga brevicollis (Choanoflagellate), this protein is Coiled-coil domain-containing protein 42 homolog.